A 509-amino-acid polypeptide reads, in one-letter code: Maturase K (509 aa).

It belongs to the intron maturase 2 family. MatK subfamily.

Its subcellular location is the plastid. It is found in the chloroplast. Its function is as follows. Usually encoded in the trnK tRNA gene intron. Probably assists in splicing its own and other chloroplast group II introns. In Clematis lasiantha (Pipestem clematis), this protein is Maturase K.